The primary structure comprises 317 residues: Carbonic anhydrase 5B, mitochondrial (317 aa).

The transit peptide at 1-33 (MVVMNSLRVILQASPGKLLWRKFQIPRFMPARP) directs the protein to the mitochondrion. The Alpha-carbonic anhydrase domain maps to 37-296 (YTCTYKTRNR…LMNRTVRSSF (260 aa)). Zn(2+) is bound by residues histidine 130, histidine 132, and histidine 155. 235–236 (TT) contacts substrate.

It belongs to the alpha-carbonic anhydrase family. Requires Zn(2+) as cofactor. In terms of tissue distribution, strongest expression in heart, pancreas, kidney, placenta, lung, and skeletal muscle. Not expressed in liver.

It localises to the mitochondrion. The catalysed reaction is hydrogencarbonate + H(+) = CO2 + H2O. With respect to regulation, inhibited by coumarins, sulfonamide derivatives such as acetazolamide (AZA), saccharin and Foscarnet (phosphonoformate trisodium salt). Its function is as follows. Mitochondrial carbonic anhydrase that catalyzes the reversible conversion of carbon dioxide to bicarbonate/HCO3. In Homo sapiens (Human), this protein is Carbonic anhydrase 5B, mitochondrial (CA5B).